The following is a 288-amino-acid chain: Proteasome subunit beta (288 aa).

The propeptide at 1 to 60 (MESNADWGSRGGLPQAFLTPGISSFSEFLKGFAPEYLPSGRPLPGGLGSASAAGDIAPHG) is removed in mature form; by autocatalysis. The Nucleophile role is filled by Thr61.

It belongs to the peptidase T1B family. In terms of assembly, the 20S proteasome core is composed of 14 alpha and 14 beta subunits that assemble into four stacked heptameric rings, resulting in a barrel-shaped structure. The two inner rings, each composed of seven catalytic beta subunits, are sandwiched by two outer rings, each composed of seven alpha subunits. The catalytic chamber with the active sites is on the inside of the barrel. Has a gated structure, the ends of the cylinder being occluded by the N-termini of the alpha-subunits. Is capped by the proteasome-associated ATPase, ARC.

Its subcellular location is the cytoplasm. It carries out the reaction Cleavage of peptide bonds with very broad specificity.. The protein operates within protein degradation; proteasomal Pup-dependent pathway. The formation of the proteasomal ATPase ARC-20S proteasome complex, likely via the docking of the C-termini of ARC into the intersubunit pockets in the alpha-rings, may trigger opening of the gate for substrate entry. Interconversion between the open-gate and close-gate conformations leads to a dynamic regulation of the 20S proteasome proteolysis activity. Its function is as follows. Component of the proteasome core, a large protease complex with broad specificity involved in protein degradation. In Catenulispora acidiphila (strain DSM 44928 / JCM 14897 / NBRC 102108 / NRRL B-24433 / ID139908), this protein is Proteasome subunit beta.